Consider the following 121-residue polypeptide: Small ribosomal subunit protein uS13 (121 aa).

The tract at residues 92 to 121 (RKGLPVRGQSSKTNARTVKGPRKTVANKKK) is disordered. Residues 110-121 (KGPRKTVANKKK) are compositionally biased toward basic residues.

The protein belongs to the universal ribosomal protein uS13 family. Part of the 30S ribosomal subunit. Forms a loose heterodimer with protein S19. Forms two bridges to the 50S subunit in the 70S ribosome.

Functionally, located at the top of the head of the 30S subunit, it contacts several helices of the 16S rRNA. In the 70S ribosome it contacts the 23S rRNA (bridge B1a) and protein L5 of the 50S subunit (bridge B1b), connecting the 2 subunits; these bridges are implicated in subunit movement. Contacts the tRNAs in the A and P-sites. The sequence is that of Small ribosomal subunit protein uS13 from Mycoplasma mycoides subsp. mycoides SC (strain CCUG 32753 / NCTC 10114 / PG1).